The primary structure comprises 317 residues: Zinc finger protein 771 (317 aa).

Lys33 is covalently cross-linked (Glycyl lysine isopeptide (Lys-Gly) (interchain with G-Cter in SUMO2)). 8 consecutive C2H2-type zinc fingers follow at residues 63–85 (HACPDCGRAFARRSTLAKHARTH), 91–113 (FACTECGRCFSQKSALTKHGRTH), 119–141 (YQCPECDKRFSAASNLRQHRRRH), 147–169 (YACAHCGRRFAQSSNYAQHLRVH), 175–197 (YACPDCGRAFGGSSCLARHRRTH), 203–225 (YACADCGTRFAQSSALAKHRRVH), 231–253 (HRCAVCGRRFGHRSNLAEHARTH), and 259–281 (YPCTECGRRFRLSSHFIRHRRAH).

The protein belongs to the krueppel C2H2-type zinc-finger protein family.

The protein resides in the nucleus. May be involved in transcriptional regulation. The sequence is that of Zinc finger protein 771 (Znf771) from Mus musculus (Mouse).